The primary structure comprises 955 residues: 4-alpha-glucanotransferase DPE2 (955 aa).

Met1 bears the N-acetylmethionine mark. CBM20 domains are found at residues 13–122 (KSSK…LWQS) and 157–270 (SDQD…PWRG). The segment at 925–955 (SGRSVPANVSGEDINKSRGEVIANGSTKPNP) is disordered.

The protein belongs to the disproportionating enzyme family.

The protein resides in the cytoplasm. It is found in the cytosol. The enzyme catalyses Transfers a segment of a (1-&gt;4)-alpha-D-glucan to a new position in an acceptor, which may be glucose or a (1-&gt;4)-alpha-D-glucan.. With respect to regulation, inactivated in response to cold stress. Its function is as follows. Cytosolic alpha-glucanotransferase essential for the cytosolic metabolism of maltose, an intermediate on the pathway by which starch is converted to sucrose in leaves at night. Metabolizes maltose exported from the chloroplast and is specific for beta-maltose. May play a role in freezing tolerance. Temperature drop induces inactivation of DPE2 that leads to rapid accumulation of maltose, a solute that protects cells from freezing damage. The polypeptide is 4-alpha-glucanotransferase DPE2 (DPE2) (Arabidopsis thaliana (Mouse-ear cress)).